The following is a 276-amino-acid chain: NH(3)-dependent NAD(+) synthetase (276 aa).

Residue 43–50 participates in ATP binding; the sequence is GISGGVDS. Asp-49 serves as a coordination point for Mg(2+). Residue Arg-146 coordinates deamido-NAD(+). Thr-166 contributes to the ATP binding site. Position 171 (Glu-171) interacts with Mg(2+). Deamido-NAD(+) is bound by residues Lys-179 and Asp-186. ATP is bound by residues Lys-195 and Thr-217. 266–267 is a binding site for deamido-NAD(+); the sequence is HK.

Belongs to the NAD synthetase family. As to quaternary structure, homodimer.

It catalyses the reaction deamido-NAD(+) + NH4(+) + ATP = AMP + diphosphate + NAD(+) + H(+). The protein operates within cofactor biosynthesis; NAD(+) biosynthesis; NAD(+) from deamido-NAD(+) (ammonia route): step 1/1. Catalyzes the ATP-dependent amidation of deamido-NAD to form NAD. Uses ammonia as a nitrogen source. The protein is NH(3)-dependent NAD(+) synthetase of Aliivibrio fischeri (strain MJ11) (Vibrio fischeri).